We begin with the raw amino-acid sequence, 772 residues long: Lon protease (772 aa).

The 195-residue stretch at 6–200 (YPTLPLKNTV…LMHRYLNHEV (195 aa)) folds into the Lon N-terminal domain. Residue 352–359 (GPPGVGKT) participates in ATP binding. In terms of domain architecture, Lon proteolytic spans 588 to 769 (QLAPGVAAGL…EEVLAEAIPD (182 aa)). Residues S675 and K718 contribute to the active site.

The protein belongs to the peptidase S16 family. In terms of assembly, homohexamer. Organized in a ring with a central cavity.

It is found in the cytoplasm. It catalyses the reaction Hydrolysis of proteins in presence of ATP.. Functionally, ATP-dependent serine protease that mediates the selective degradation of mutant and abnormal proteins as well as certain short-lived regulatory proteins. Required for cellular homeostasis and for survival from DNA damage and developmental changes induced by stress. Degrades polypeptides processively to yield small peptide fragments that are 5 to 10 amino acids long. Binds to DNA in a double-stranded, site-specific manner. The sequence is that of Lon protease from Nitrosococcus oceani (strain ATCC 19707 / BCRC 17464 / JCM 30415 / NCIMB 11848 / C-107).